Here is a 328-residue protein sequence, read N- to C-terminus: MKAPVRVAVTGAAGQIGYALLFRIASGEMLGKDQPVILQLLELPVDKAQAALKGVMMELEDCAFPLLAGMVGTDDAEVAFKDADIALLVGARPRGPGMERKDLLLENAKIFTAQGAALNKVASRDVKVLVVGNPANTNAYIAMKSAPDLKPENFTAMLRLDHNRALSQLSTKLGKPVGGMEKLVVWGNHSPTMYPDYRFATADGASIADAINDQEWNANTFIPTVGKRGAAIIEARGSSSAASAANAAIDHVRDWVLGSNGKWVTMGVPSDGSYGIPEGVIFGFAVTTENGKYTLVKDLPIDDFSQKYIDKTLAELEEERAGVAHLLG.

Residue 11 to 17 (GAAGQIG) coordinates NAD(+). 2 residues coordinate substrate: R94 and R100. Residues N107, Q114, and 131–133 (VGN) each bind NAD(+). The substrate site is built by N133 and R164. H189 functions as the Proton acceptor in the catalytic mechanism.

Belongs to the LDH/MDH superfamily. MDH type 2 family.

The enzyme catalyses (S)-malate + NAD(+) = oxaloacetate + NADH + H(+). Catalyzes the reversible oxidation of malate to oxaloacetate. This is Malate dehydrogenase from Stenotrophomonas maltophilia (strain K279a).